We begin with the raw amino-acid sequence, 548 residues long: Chaperonin GroEL (548 aa).

ATP contacts are provided by residues Thr30 to Pro33, Lys51, Asp87 to Thr91, Gly415, and Asp494.

It belongs to the chaperonin (HSP60) family. In terms of assembly, forms a cylinder of 14 subunits composed of two heptameric rings stacked back-to-back. Interacts with the co-chaperonin GroES.

Its subcellular location is the cytoplasm. It carries out the reaction ATP + H2O + a folded polypeptide = ADP + phosphate + an unfolded polypeptide.. In terms of biological role, together with its co-chaperonin GroES, plays an essential role in assisting protein folding. The GroEL-GroES system forms a nano-cage that allows encapsulation of the non-native substrate proteins and provides a physical environment optimized to promote and accelerate protein folding. The chain is Chaperonin GroEL from Oleispira antarctica.